We begin with the raw amino-acid sequence, 62 residues long: LTCVTGKSIGGISTEECAAGQKRCNKKWTKMGPKLYDVSRGCAATCPTADEYGCVKCCNTDK.

3 cysteine pairs are disulfide-bonded: cysteine 3/cysteine 24, cysteine 17/cysteine 42, and cysteine 46/cysteine 57.

The protein belongs to the three-finger toxin family. Short-chain subfamily. Aminergic toxin sub-subfamily. Heterodimer of C8S2 chain 1 (AC P01410) and chain 2; disulfide-linked. Expressed by the venom gland.

The protein resides in the secreted. In terms of biological role, this protein shows a synergetic toxic effect in that it enhances the toxicity of other toxins. The protein is Synergistic-type venom protein C8S2, chain 2 of Dendroaspis angusticeps (Eastern green mamba).